A 259-amino-acid polypeptide reads, in one-letter code: Ribonuclease HII (259 aa).

In terms of domain architecture, RNase H type-2 spans 70-258; sequence TLIAGIDEVG…VKSLVLGKKE (189 aa). A divalent metal cation contacts are provided by aspartate 76, glutamate 77, and aspartate 168.

The protein belongs to the RNase HII family. It depends on Mn(2+) as a cofactor. Requires Mg(2+) as cofactor.

Its subcellular location is the cytoplasm. The enzyme catalyses Endonucleolytic cleavage to 5'-phosphomonoester.. Endonuclease that specifically degrades the RNA of RNA-DNA hybrids. The chain is Ribonuclease HII from Streptococcus pneumoniae (strain P1031).